The primary structure comprises 225 residues: Uracil-DNA glycosylase (225 aa).

Aspartate 68 serves as the catalytic Proton acceptor.

It belongs to the uracil-DNA glycosylase (UDG) superfamily. UNG family.

Its subcellular location is the cytoplasm. It catalyses the reaction Hydrolyzes single-stranded DNA or mismatched double-stranded DNA and polynucleotides, releasing free uracil.. In terms of biological role, excises uracil residues from the DNA which can arise as a result of misincorporation of dUMP residues by DNA polymerase or due to deamination of cytosine. The sequence is that of Uracil-DNA glycosylase from Parafrankia sp. (strain EAN1pec).